We begin with the raw amino-acid sequence, 647 residues long: Probable squalene--hopene cyclase (647 aa).

Residues 67–108 form a PFTB 1 repeat; it reads EAKIGNYLRRTQGAHGGWPLVHDGPFDMSASVKSYFALKMIG. The active-site Proton donor is the Asp-388. 2 PFTB repeats span residues 413–454 and 530–577; these read IARG…GALL and IRKA…ALLG.

The protein belongs to the terpene cyclase/mutase family.

The enzyme catalyses squalene = hop-22(29)-ene. It catalyses the reaction squalene + H2O = hopan-22-ol. It participates in secondary metabolite biosynthesis; hopanoid biosynthesis. Its function is as follows. Catalyzes the cyclization of squalene into hopene. Probably part of an operon y4aABCD involved in the synthesis of an isoprenoid compound. The chain is Probable squalene--hopene cyclase (shc) from Sinorhizobium fredii (strain NBRC 101917 / NGR234).